Reading from the N-terminus, the 358-residue chain is Purine permease 2 (358 aa).

Helical transmembrane passes span 6–26, 37–57, 74–94, 110–130, 134–154, 170–190, 209–229, 262–282, 288–308, and 312–332; these read VLVI…PLMM, IWFP…PLLL, FFLM…LVGF, TASL…FFMV, FTPF…VLAL, VVGF…LPLV, FQMV…LAAG, VIVF…GLIF, VSGI…VICF, and FQAG…SYFY. The EamA domain maps to 46–154; it reads VGCPLIFFPL…LTGGAVVLAL (109 aa).

Belongs to the purine permeases (TC 2.A.7.14) family. As to expression, expressed in the vascular system of leaves. Restricted to the phloem. Expressed in flowers and roots and not detected in stems.

It localises to the membrane. Its activity is regulated as follows. Competitive inhibition of adenine transport by isopentenyladenine, kinetin, benzylaminopurine, trans- and cis-zeatin and trans-zeatin riboside. Mediates adenine transport. May be involved in the uptake of cytokinin analogs. The sequence is that of Purine permease 2 (PUP2) from Arabidopsis thaliana (Mouse-ear cress).